The primary structure comprises 440 residues: Cytochrome P450 monooygenase 1 (440 aa).

Position 381 (Cys-381) interacts with heme.

Belongs to the cytochrome P450 family. Heme serves as cofactor.

The protein operates within plant hormone biosynthesis; gibberellin biosynthesis. Functionally, GA14 synthase; part of the gene cluster that mediates the biosynthesis of gibberellins (GAs), diterpenoids that may provide a selective advantage during infection of the preferred host plant, rice. Gibberellins (GAs) are diterpenoids and are synthesized via the mevalonate pathway. Biosynthesis of the major metabolite GA3 (gibberellic acid) from geranylgeranyl diphosphate (GGPP) requires 13 steps. The GGPP produced by the geranylgeranyl diphosphate synthase GGS2 is converted to ent-kaurene via ent-copalyldiphosphate in a two-step cyclization reaction performed by the bifunctional ent-copalyl diphosphate synthase/ent-kaurene synthase enzyme (CPS/KS). Ent-Kaurene is metabolized to GAs by a series of oxidation reactions catalyzed by cytochrome P450 monooxygenases. Cytochrome P450 monooxygenase P450-4 is an ent-kaurene oxidase that catalyzes the three oxidation steps between ent-kaurene and ent-kaurenoic acid. The highly multifunctional cytochrome P450 monooxygenase P450-1 then catalyzes four steps involving oxidation at two carbon atoms, in the main pathway from ent-kaurenoic acid to GA14 via GA12-aldehyde as well as producing kaurenolides and fujenoic acids as by-products. The cytochrome P450 monooxygenase P450-2 then converts GA14 to GA4 by removal of C-20. GA4 is further converted to GA7 by the GA4 desaturase DES via 1,2-desaturation before cytochrome P450 monooxygenase P450-3, a 13-hydroxylase, hydroxylates GA7 to GA3, the final product of the GA-biosynthetic pathway. This chain is Cytochrome P450 monooygenase 1, found in Gibberella fujikuroi (strain CBS 195.34 / IMI 58289 / NRRL A-6831) (Bakanae and foot rot disease fungus).